A 547-amino-acid polypeptide reads, in one-letter code: Chaperonin GroEL (547 aa).

ATP is bound by residues 30 to 33 (TLGP), Lys-51, 87 to 91 (DGTTT), Gly-415, and Asp-496.

It belongs to the chaperonin (HSP60) family. Forms a cylinder of 14 subunits composed of two heptameric rings stacked back-to-back. Interacts with the co-chaperonin GroES.

Its subcellular location is the cytoplasm. It catalyses the reaction ATP + H2O + a folded polypeptide = ADP + phosphate + an unfolded polypeptide.. Functionally, together with its co-chaperonin GroES, plays an essential role in assisting protein folding. The GroEL-GroES system forms a nano-cage that allows encapsulation of the non-native substrate proteins and provides a physical environment optimized to promote and accelerate protein folding. This is Chaperonin GroEL from Actinobacillus succinogenes (strain ATCC 55618 / DSM 22257 / CCUG 43843 / 130Z).